The sequence spans 416 residues: Succinate--CoA ligase [ADP-forming] subunit beta (416 aa).

The transit peptide at 1 to 14 directs the protein to the hydrogenosome; it reads MLRMAPKTVGAVRN. Residues Lys-64, 71-73, and Glu-132 contribute to the ATP site; that span reads GRG. Residues Asn-224 and Asp-242 each contribute to the Mg(2+) site. Substrate is bound by residues Asn-293 and 350 to 352; that span reads GIM.

It belongs to the succinate/malate CoA ligase beta subunit family. As to quaternary structure, heterodimer of an alpha and a beta subunit. It depends on Mg(2+) as a cofactor.

It is found in the hydrogenosome. The catalysed reaction is succinate + ATP + CoA = succinyl-CoA + ADP + phosphate. Its pathway is carbohydrate metabolism; tricarboxylic acid cycle; succinate from succinyl-CoA (ligase route): step 1/1. Functionally, succinyl-CoA synthetase functions in the citric acid cycle (TCA), coupling the hydrolysis of succinyl-CoA to the synthesis of ATP and thus represents the only step of substrate-level phosphorylation in the TCA. The beta subunit provides nucleotide specificity of the enzyme and binds the substrate succinate, while the binding sites for coenzyme A and phosphate are found in the alpha subunit. The protein is Succinate--CoA ligase [ADP-forming] subunit beta (SCSb) of Blastocystis sp. subtype 1 (strain ATCC 50177 / NandII).